A 486-amino-acid polypeptide reads, in one-letter code: N-succinylglutamate 5-semialdehyde dehydrogenase (486 aa).

An NAD(+)-binding site is contributed by 220-225; the sequence is GSSRTG. Catalysis depends on residues glutamate 243 and cysteine 277.

This sequence belongs to the aldehyde dehydrogenase family. AstD subfamily.

It catalyses the reaction N-succinyl-L-glutamate 5-semialdehyde + NAD(+) + H2O = N-succinyl-L-glutamate + NADH + 2 H(+). It functions in the pathway amino-acid degradation; L-arginine degradation via AST pathway; L-glutamate and succinate from L-arginine: step 4/5. Catalyzes the NAD-dependent reduction of succinylglutamate semialdehyde into succinylglutamate. This chain is N-succinylglutamate 5-semialdehyde dehydrogenase, found in Shewanella putrefaciens (strain CN-32 / ATCC BAA-453).